The sequence spans 509 residues: Steroid 17-alpha-hydroxylase/17,20 lyase (509 aa).

Asn202 contacts substrate. Position 442 (Cys442) interacts with heme.

It belongs to the cytochrome P450 family. Requires heme as cofactor.

The protein resides in the endoplasmic reticulum membrane. The protein localises to the microsome membrane. It carries out the reaction a C21-steroid + reduced [NADPH--hemoprotein reductase] + O2 = a 17alpha-hydroxy-C21-steroid + oxidized [NADPH--hemoprotein reductase] + H2O + H(+). It catalyses the reaction progesterone + reduced [NADPH--hemoprotein reductase] + O2 = 17alpha-hydroxyprogesterone + oxidized [NADPH--hemoprotein reductase] + H2O + H(+). The enzyme catalyses pregnenolone + reduced [NADPH--hemoprotein reductase] + O2 = 17alpha-hydroxypregnenolone + oxidized [NADPH--hemoprotein reductase] + H2O + H(+). The catalysed reaction is 17alpha-hydroxyprogesterone + reduced [NADPH--hemoprotein reductase] + O2 = androst-4-ene-3,17-dione + acetate + oxidized [NADPH--hemoprotein reductase] + H2O + 2 H(+). It carries out the reaction 17alpha-hydroxyprogesterone + reduced [NADPH--hemoprotein reductase] + O2 = 16alpha,17alpha-dihydroxyprogesterone + oxidized [NADPH--hemoprotein reductase] + H2O + H(+). It catalyses the reaction 16alpha,17alpha-dihydroxyprogesterone + reduced [NADPH--hemoprotein reductase] + O2 = 6beta,16alpha,17alpha-trihydroxyprogesterone + oxidized [NADPH--hemoprotein reductase] + H2O + H(+). The enzyme catalyses 17alpha-hydroxypregnenolone + reduced [NADPH--hemoprotein reductase] + O2 = 3beta-hydroxyandrost-5-en-17-one + acetate + oxidized [NADPH--hemoprotein reductase] + H2O + 2 H(+). The catalysed reaction is 16alpha,17alpha-dihydroxypregnenolone + reduced [NADPH--hemoprotein reductase] + O2 = 3beta,16alpha-dihydroxy-androst-5-en-17-one + acetate + oxidized [NADPH--hemoprotein reductase] + H2O + 2 H(+). It carries out the reaction 3beta-hydroxyandrost-5-en-17-one + reduced [NADPH--hemoprotein reductase] + O2 = 3beta,16alpha-dihydroxy-androst-5-en-17-one + oxidized [NADPH--hemoprotein reductase] + H2O + H(+). It catalyses the reaction androst-4-ene-3,17-dione + reduced [NADPH--hemoprotein reductase] + O2 = 16alpha-hydroxyandrost-4-ene-3,17-dione + oxidized [NADPH--hemoprotein reductase] + H2O + H(+). It functions in the pathway steroid hormone biosynthesis. The protein operates within steroid biosynthesis; glucocorticoid biosynthesis. Regulated predominantly by intracellular cAMP levels. The 17,20-lyase activity is stimulated by cytochrome b5, which acts as an allosteric effector increasing the Vmax of the lyase activity. Its function is as follows. A cytochrome P450 monooxygenase involved in corticoid and androgen biosynthesis. Catalyzes 17-alpha hydroxylation of C21 steroids, which is common for both pathways. A second oxidative step, required only for androgen synthesis, involves an acyl-carbon cleavage. The 17-alpha hydroxy intermediates, as part of adrenal glucocorticoids biosynthesis pathway, are precursors of cortisol. Hydroxylates steroid hormones, pregnenolone and progesterone to form 17-alpha hydroxy metabolites, followed by the cleavage of the C17-C20 bond to form C19 steroids, dehydroepiandrosterone (DHEA) and androstenedione. Has 16-alpha hydroxylase activity. Catalyzes 16-alpha hydroxylation of 17-alpha hydroxy pregnenolone, followed by the cleavage of the C17-C20 bond to form 16-alpha-hydroxy DHEA. Also 16-alpha hydroxylates androgens, relevant for estriol synthesis. Mechanistically, uses molecular oxygen inserting one oxygen atom into a substrate, and reducing the second into a water molecule, with two electrons provided by NADPH via cytochrome P450 reductase (CPR; NADPH-ferrihemoprotein reductase). The polypeptide is Steroid 17-alpha-hydroxylase/17,20 lyase (CYP17A1) (Sus scrofa (Pig)).